We begin with the raw amino-acid sequence, 310 residues long: Glycerol-3-phosphate dehydrogenase [NAD(P)+] (310 aa).

The NADPH site is built by Trp14, Arg34, Arg35, and Lys82. Sn-glycerol 3-phosphate-binding residues include Lys82 and Gly110. Ser114 lines the NADPH pocket. The sn-glycerol 3-phosphate site is built by Lys165, Asp218, Ser228, Arg229, and Asn230. Lys165 acts as the Proton acceptor in catalysis. Position 229 (Arg229) interacts with NADPH. Residue Glu255 coordinates NADPH.

Belongs to the NAD-dependent glycerol-3-phosphate dehydrogenase family.

It is found in the cytoplasm. It carries out the reaction sn-glycerol 3-phosphate + NAD(+) = dihydroxyacetone phosphate + NADH + H(+). It catalyses the reaction sn-glycerol 3-phosphate + NADP(+) = dihydroxyacetone phosphate + NADPH + H(+). It participates in membrane lipid metabolism; glycerophospholipid metabolism. Functionally, catalyzes the reduction of the glycolytic intermediate dihydroxyacetone phosphate (DHAP) to sn-glycerol 3-phosphate (G3P), the key precursor for phospholipid synthesis. This chain is Glycerol-3-phosphate dehydrogenase [NAD(P)+], found in Acaryochloris marina (strain MBIC 11017).